Here is a 72-residue protein sequence, read N- to C-terminus: uncharacterized protein (72 aa).

Belongs to the ycf76 family.

It localises to the plastid. It is found in the chloroplast. This is an uncharacterized protein from Oryza nivara (Indian wild rice).